A 100-amino-acid polypeptide reads, in one-letter code: MHLTPREKDKLLIAMAAQVARRRLERGVKLNHPEAIALITDFVVEGARDGRSVAELMRDGGTVLTREQVMEGVPEMIHDVQVEATFPDGTKLVTVHNPIR.

The protein belongs to the urease gamma subunit family. Heterotrimer of UreA (gamma), UreB (beta) and UreC (alpha) subunits. Three heterotrimers associate to form the active enzyme.

It is found in the cytoplasm. The catalysed reaction is urea + 2 H2O + H(+) = hydrogencarbonate + 2 NH4(+). It participates in nitrogen metabolism; urea degradation; CO(2) and NH(3) from urea (urease route): step 1/1. The protein is Urease subunit gamma of Granulibacter bethesdensis (strain ATCC BAA-1260 / CGDNIH1).